Here is a 312-residue protein sequence, read N- to C-terminus: Glyoxylate/hydroxypyruvate reductase A (312 aa).

Arginine 227 is a catalytic residue. Histidine 275 (proton donor) is an active-site residue.

This sequence belongs to the D-isomer specific 2-hydroxyacid dehydrogenase family. GhrA subfamily.

It is found in the cytoplasm. The catalysed reaction is glycolate + NADP(+) = glyoxylate + NADPH + H(+). It catalyses the reaction (R)-glycerate + NAD(+) = 3-hydroxypyruvate + NADH + H(+). It carries out the reaction (R)-glycerate + NADP(+) = 3-hydroxypyruvate + NADPH + H(+). Catalyzes the NADPH-dependent reduction of glyoxylate and hydroxypyruvate into glycolate and glycerate, respectively. Inactive towards 2-oxo-D-gluconate, 2-oxoglutarate, oxaloacetate and pyruvate. Only D- and L-glycerate are involved in the oxidative activity with NADP. Activity with NAD is very low. The chain is Glyoxylate/hydroxypyruvate reductase A (ghrA) from Escherichia coli (strain K12).